Here is a 382-residue protein sequence, read N- to C-terminus: Lipid-A-disaccharide synthase (382 aa).

The protein belongs to the LpxB family.

The enzyme catalyses 2-N,3-O-bis[(3R)-3-hydroxytetradecanoyl]-alpha-D-glucosaminyl 1-phosphate + UDP-2-N,3-O-bis[(3R)-3-hydroxytetradecanoyl]-alpha-D-glucosamine = lipid A disaccharide (E. coli) + UDP + H(+). It catalyses the reaction a lipid X + a UDP-2-N,3-O-bis[(3R)-3-hydroxyacyl]-alpha-D-glucosamine = a lipid A disaccharide + UDP + H(+). The protein operates within glycolipid biosynthesis; lipid IV(A) biosynthesis; lipid IV(A) from (3R)-3-hydroxytetradecanoyl-[acyl-carrier-protein] and UDP-N-acetyl-alpha-D-glucosamine: step 5/6. Condensation of UDP-2,3-diacylglucosamine and 2,3-diacylglucosamine-1-phosphate to form lipid A disaccharide, a precursor of lipid A, a phosphorylated glycolipid that anchors the lipopolysaccharide to the outer membrane of the cell. This is Lipid-A-disaccharide synthase from Serratia proteamaculans (strain 568).